A 68-amino-acid chain; its full sequence is Protein transport protein Sec61 gamma-2 subunit (68 aa).

The Cytoplasmic portion of the chain corresponds to 1-32 (MDKVVKFAEPGRAFAKDSIRLVKRCTKPDRKE). The chain crosses the membrane as a helical span at residues 33–61 (FQKIAIATAVGFCIMGFIGFFVKLIHIPI). The Extracellular segment spans residues 62 to 68 (NNIIVGS).

It belongs to the SecE/SEC61-gamma family. In terms of assembly, heterotrimeric complex composed of SEC61-alpha, SEC61-beta and SEC61-gamma.

It localises to the endoplasmic reticulum membrane. Its function is as follows. Necessary for protein translocation in the endoplasmic reticulum. The sequence is that of Protein transport protein Sec61 gamma-2 subunit (Sec61gamma) from Drosophila melanogaster (Fruit fly).